Reading from the N-terminus, the 190-residue chain is Putative serine carboxypeptidase-like 54 (190 aa).

Residues 1 to 25 (MATKTFSLPFLLIVCIFSQLSSTFG) form the signal peptide. N-linked (GlcNAc...) asparagine glycans are attached at residues asparagine 58, asparagine 59, and asparagine 105.

The protein belongs to the peptidase S10 family.

It is found in the secreted. The sequence is that of Putative serine carboxypeptidase-like 54 (SCPL54) from Arabidopsis thaliana (Mouse-ear cress).